Here is a 485-residue protein sequence, read N- to C-terminus: CUGBP Elav-like family member 5 (485 aa).

Over residues 1–11 (MARLTESEARR) the composition is skewed to basic and acidic residues. The disordered stretch occupies residues 1–40 (MARLTESEARRQQQQLLQPRPSPVGSSGPEPPGGQPDGMK). Positions 12 to 28 (QQQQLLQPRPSPVGSSG) are enriched in low complexity. RRM domains lie at 45–126 (IKLF…PADS), 134–214 (RKLF…FADT), and 400–478 (CNLF…LKRP).

The protein belongs to the CELF/BRUNOL family. In terms of tissue distribution, expressed in brain.

The protein localises to the nucleus. Its subcellular location is the cytoplasm. In terms of biological role, RNA-binding protein implicated in the regulation of pre-mRNA alternative splicing. Mediates exon inclusion and/or exclusion in pre-mRNA that are subject to tissue-specific and developmentally regulated alternative splicing. Specifically activates exon 5 inclusion of cardiac isoforms of TNNT2 during heart remodeling at the juvenile to adult transition. Binds to muscle-specific splicing enhancer (MSE) intronic sites flanking the alternative exon 5 of TNNT2 pre-mRNA. The sequence is that of CUGBP Elav-like family member 5 (CELF5) from Homo sapiens (Human).